Consider the following 110-residue polypeptide: T cell receptor alpha variable 35 (110 aa).

The signal sequence occupies residues 1–19 (MLLEHLLIILWMQLTWVSG). The 91-residue stretch at 20-110 (QQLNQSPQSM…DVGIYFCAGQ (91 aa)) folds into the Ig-like domain. Residues Asn40 and Asn93 are each glycosylated (N-linked (GlcNAc...) asparagine). Cysteines 41 and 107 form a disulfide.

As to quaternary structure, alpha-beta TR is a heterodimer composed of an alpha and beta chain; disulfide-linked. The alpha-beta TR is associated with the transmembrane signaling CD3 coreceptor proteins to form the TR-CD3 (TcR or TCR). The assembly of alpha-beta TR heterodimers with CD3 occurs in the endoplasmic reticulum where a single alpha-beta TR heterodimer associates with one CD3D-CD3E heterodimer, one CD3G-CD3E heterodimer and one CD247 homodimer forming a stable octameric structure. CD3D-CD3E and CD3G-CD3E heterodimers preferentially associate with TR alpha and TR beta chains, respectively. The association of the CD247 homodimer is the last step of TcR assembly in the endoplasmic reticulum and is required for transport to the cell surface.

It is found in the cell membrane. Its function is as follows. V region of the variable domain of T cell receptor (TR) alpha chain that participates in the antigen recognition. Alpha-beta T cell receptors are antigen specific receptors which are essential to the immune response and are present on the cell surface of T lymphocytes. Recognize peptide-major histocompatibility (MH) (pMH) complexes that are displayed by antigen presenting cells (APC), a prerequisite for efficient T cell adaptive immunity against pathogens. Binding of alpha-beta TR to pMH complex initiates TR-CD3 clustering on the cell surface and intracellular activation of LCK that phosphorylates the ITAM motifs of CD3G, CD3D, CD3E and CD247 enabling the recruitment of ZAP70. In turn ZAP70 phosphorylates LAT, which recruits numerous signaling molecules to form the LAT signalosome. The LAT signalosome propagates signal branching to three major signaling pathways, the calcium, the mitogen-activated protein kinase (MAPK) kinase and the nuclear factor NF-kappa-B (NF-kB) pathways, leading to the mobilization of transcription factors that are critical for gene expression and essential for T cell growth and differentiation. The T cell repertoire is generated in the thymus, by V-(D)-J rearrangement. This repertoire is then shaped by intrathymic selection events to generate a peripheral T cell pool of self-MH restricted, non-autoaggressive T cells. Post-thymic interaction of alpha-beta TR with the pMH complexes shapes TR structural and functional avidity. This is T cell receptor alpha variable 35 from Homo sapiens (Human).